The primary structure comprises 1581 residues: Ankyrin repeat domain-containing protein 26 (1581 aa).

The tract at residues Met-1 to Arg-22 is disordered. Ser-13 bears the Phosphoserine mark. 5 ANK repeats span residues Lys-46–Asp-76, Lys-80–Ala-109, Glu-113–Val-142, Ser-146–Ala-175, and Asp-179–Ala-208. 4 disordered regions span residues Arg-225–Lys-270, Leu-299–Gly-343, Ser-361–Ser-381, and Val-488–Ala-652. Positions Ser-229–Thr-250 are enriched in polar residues. 2 positions are modified to phosphoserine: Ser-239 and Ser-260. Over residues Ser-308–Glu-319 the composition is skewed to acidic residues. Polar residues predominate over residues Arg-327–Ser-337. The segment covering Pro-367–Ser-381 has biased composition (basic and acidic residues). Residues Lys-491 to Lys-504 show a composition bias toward polar residues. 3 stretches are compositionally biased toward basic and acidic residues: residues Ser-505–Thr-516, Ser-524–Glu-538, and Lys-585–Ala-601. Ser-511 carries the phosphoserine modification. 4 coiled-coil regions span residues Arg-715 to Met-845, His-876 to His-1345, Arg-1396 to Leu-1470, and Leu-1521 to Val-1550.

In terms of assembly, interacts with TRIO. Interacts with GPS2. Interacts with CCDC85B. Interacts with HMMR. In terms of tissue distribution, widely expressed. Expressed in the arcuate and ventromedial nuclei within the hypothalamus and in the ependyma and the circumventricular organs (at protein level).

It localises to the cytoplasm. It is found in the cytosol. In terms of biological role, acts as a regulator of adipogenesis. Involved in the regulation of the feeding behavior. This is Ankyrin repeat domain-containing protein 26 (Ankrd26) from Mus musculus (Mouse).